Consider the following 196-residue polypeptide: Peroxiredoxin TSA2 (196 aa).

Residues 3–161 (AEVQKQAPPF…ALRLVEGFQW (159 aa)) enclose the Thioredoxin domain. A Glycyl lysine isopeptide (Lys-Gly) (interchain with G-Cter in ubiquitin) cross-link involves residue K14. The active-site Cysteine sulfenic acid (-SOH) intermediate is C48. Residues K89 and K132 each participate in a glycyl lysine isopeptide (Lys-Gly) (interchain with G-Cter in ubiquitin) cross-link. At T174 the chain carries Phosphothreonine.

This sequence belongs to the peroxiredoxin family. AhpC/Prx1 subfamily. Homodimer; disulfide-linked, upon oxidation.

The protein resides in the cytoplasm. The catalysed reaction is a hydroperoxide + [thioredoxin]-dithiol = an alcohol + [thioredoxin]-disulfide + H2O. Functionally, thiol-specific peroxidase that catalyzes the reduction of hydrogen peroxide and organic hydroperoxides to water and alcohols, respectively. Plays a role in cell protection against oxidative stress by detoxifying peroxides and as sensor of hydrogen peroxide-mediated signaling events. Can act alternatively as peroxidase and molecular chaperone. Oxidative stress and heat shock exposure cause a reversible shift of the protein structure from low MW species to high MW complexes, triggering a peroxidase-to-chaperone functional switch. The chaperone function of the protein enhances resistance to heat shock. This chain is Peroxiredoxin TSA2, found in Saccharomyces cerevisiae (strain ATCC 204508 / S288c) (Baker's yeast).